We begin with the raw amino-acid sequence, 198 residues long: MEAFHTHSGIGVPLRRSNVDTDQIIPAVFLKRVTRTGFEDGLFAGWRSDPAFVLNLSPFDRGSVLVAGPDFGTGSSREHAVWALMDYGFRVVISSRFGDIFRGNAGKAGLLAAEVAQDDVELLWKLIEQSPGLEITANLQDRIITAATVVLPFKIDDHSAWRLLEGLDDIALTLRKLDEIEAFEGACAYWKPRTLPAP.

Belongs to the LeuD family. LeuD type 1 subfamily. Heterodimer of LeuC and LeuD.

It carries out the reaction (2R,3S)-3-isopropylmalate = (2S)-2-isopropylmalate. It participates in amino-acid biosynthesis; L-leucine biosynthesis; L-leucine from 3-methyl-2-oxobutanoate: step 2/4. Catalyzes the isomerization between 2-isopropylmalate and 3-isopropylmalate, via the formation of 2-isopropylmaleate. This is 3-isopropylmalate dehydratase small subunit (leuD) from Mycobacterium bovis (strain ATCC BAA-935 / AF2122/97).